A 524-amino-acid polypeptide reads, in one-letter code: MPSVYGFPAFTSATELLLAVTTFCLGFWVVRVTRTWVPKGLKSPPGPWGLPFIGHVLTLGKNPHLSLTKLSQQYGDVLQIRIGSTPVVVLSGLNTIKQALVKQGDDFKGRPDLYSFTLIANGQSMTFNPDSGPLWAARRRLAQNALKSFSIASDPTLASSCYLEEHVSKEAEYLISKFQKLMAEVGHFDPFKYLVVSVANVICAICFGRRYDHDDQELLSIVNLSNEFGEVTGSGYPADFIPILRYLPNSSLDAFKDLNKKFYSFMKKLIKEHYRTFEKGHIRDITDSLIEHCQDRRLDENANVQLSDDKVITIVFDLFGAGFDTITTAISWSLMYLVTNPRIQRKIQEELDTVIGRDRQPRLSDRPQLPYLEAFILETFRHSSFVPFTIPHSTIRDTSLNGFYIPKGHCVFVNQWQVNHDQELWGDPNEFRPERFLTSSGTLDKHLSEKVILFGLGKRKCIGETIGRLEVFLFLAILLQQMEFNVSPGEKVDMTPAYGLTLKHARCEHFQVQMRSSGPQHLQA.

The tract at residues 33-44 (TRTWVPKGLKSP) is mitochondrial targeting signal. Residue serine 71 is glycosylated (O-linked (GlcNAc) serine). Phenylalanine 228 serves as a coordination point for substrate. Cysteine 461 serves as a coordination point for heme.

Belongs to the cytochrome P450 family. As to quaternary structure, both Cytochrome P450MT2A and Cytochrome P450MT2B interact with cytosolic chaperones HSP70 and HSP90; this interaction is required for initial targeting to mitochondria. P450MT2B interacts (via mitochondrial targeting signal) with TOMM40 (via N-terminus); this interaction is required for translocation across the mitochondrial outer membrane. Heme serves as cofactor. Post-translationally, two forms; MT2A (long form) and MT2B (short form); are produced by NH2-terminal proteolytic cleavage. This cleavage activates a cryptic mitochondrial targeting signal. Liver.

Its subcellular location is the cytoplasm. The protein resides in the endoplasmic reticulum membrane. The protein localises to the mitochondrion inner membrane. It is found in the microsome membrane. It catalyses the reaction an organic molecule + reduced [NADPH--hemoprotein reductase] + O2 = an alcohol + oxidized [NADPH--hemoprotein reductase] + H2O + H(+). The enzyme catalyses estrone + reduced [NADPH--hemoprotein reductase] + O2 = 2-hydroxyestrone + oxidized [NADPH--hemoprotein reductase] + H2O + H(+). The catalysed reaction is estrone + reduced [NADPH--hemoprotein reductase] + O2 = 4-hydroxyestrone + oxidized [NADPH--hemoprotein reductase] + H2O + H(+). It carries out the reaction estrone + reduced [NADPH--hemoprotein reductase] + O2 = 6alpha-hydroxyestrone + oxidized [NADPH--hemoprotein reductase] + H2O + H(+). It catalyses the reaction estrone + reduced [NADPH--hemoprotein reductase] + O2 = 15alpha-hydroxyestrone + oxidized [NADPH--hemoprotein reductase] + H2O + H(+). The enzyme catalyses estrone + reduced [NADPH--hemoprotein reductase] + O2 = 16alpha-hydroxyestrone + oxidized [NADPH--hemoprotein reductase] + H2O + H(+). The catalysed reaction is 17beta-estradiol + reduced [NADPH--hemoprotein reductase] + O2 = 2-hydroxy-17beta-estradiol + oxidized [NADPH--hemoprotein reductase] + H2O + H(+). It carries out the reaction 17beta-estradiol + reduced [NADPH--hemoprotein reductase] + O2 = 4-hydroxy-17beta-estradiol + oxidized [NADPH--hemoprotein reductase] + H2O + H(+). It catalyses the reaction 17beta-estradiol + reduced [NADPH--hemoprotein reductase] + O2 = 6alpha-hydroxy-17beta-estradiol + oxidized [NADPH--hemoprotein reductase] + H2O + H(+). The enzyme catalyses 17beta-estradiol + reduced [NADPH--hemoprotein reductase] + O2 = 7alpha-hydroxy-17beta-estradiol + oxidized [NADPH--hemoprotein reductase] + H2O + H(+). The catalysed reaction is 17beta-estradiol + reduced [NADPH--hemoprotein reductase] + O2 = 15alpha-hydroxy-17beta-estradiol + oxidized [NADPH--hemoprotein reductase] + H2O + H(+). It carries out the reaction (5Z,8Z,11Z)-eicosatrienoate + reduced [NADPH--hemoprotein reductase] + O2 = 19-hydroxy-(5Z,8Z,11Z)-eicosatrienoate + oxidized [NADPH--hemoprotein reductase] + H2O + H(+). It catalyses the reaction (5Z,8Z,11Z,14Z)-eicosatetraenoate + reduced [NADPH--hemoprotein reductase] + O2 = 16-hydroxy-(5Z,8Z,11Z,14Z)-eicosatetraenoate + oxidized [NADPH--hemoprotein reductase] + H2O + H(+). The enzyme catalyses (5Z,8Z,11Z,14Z)-eicosatetraenoate + reduced [NADPH--hemoprotein reductase] + O2 = 17-hydroxy-(5Z,8Z,11Z,14Z)-eicosatetraenoate + oxidized [NADPH--hemoprotein reductase] + H2O + H(+). The catalysed reaction is (5Z,8Z,11Z,14Z)-eicosatetraenoate + reduced [NADPH--hemoprotein reductase] + O2 = 18-hydroxy-(5Z,8Z,11Z,14Z)-eicosatetraenoate + oxidized [NADPH--hemoprotein reductase] + H2O + H(+). It carries out the reaction (5Z,8Z,11Z,14Z)-eicosatetraenoate + reduced [NADPH--hemoprotein reductase] + O2 = 19-hydroxy-(5Z,8Z,11Z,14Z)-eicosatetraenoate + oxidized [NADPH--hemoprotein reductase] + H2O + H(+). It catalyses the reaction (5Z,8Z,11Z,14Z,17Z)-eicosapentaenoate + reduced [NADPH--hemoprotein reductase] + O2 = 19-hydroxy-(5Z,8Z,11Z,14Z,17Z)-eicosapentaenoate + oxidized [NADPH--hemoprotein reductase] + H2O + H(+). The enzyme catalyses (5Z,8Z,11Z,14Z)-eicosatetraenoate + reduced [NADPH--hemoprotein reductase] + O2 = (8R,9S)-epoxy-(5Z,11Z,14Z)-eicosatrienoate + oxidized [NADPH--hemoprotein reductase] + H2O + H(+). The catalysed reaction is (5Z,8Z,11Z,14Z)-eicosatetraenoate + reduced [NADPH--hemoprotein reductase] + O2 = (11R,12S)-epoxy-(5Z,8Z,14Z)-eicosatrienoate + oxidized [NADPH--hemoprotein reductase] + H2O + H(+). It carries out the reaction (5Z,8Z,11Z,14Z)-eicosatetraenoate + reduced [NADPH--hemoprotein reductase] + O2 = (11S,12R)-epoxy-(5Z,8Z,14Z)-eicosatrienoate + oxidized [NADPH--hemoprotein reductase] + H2O + H(+). It catalyses the reaction (5Z,8Z,11Z,14Z)-eicosatetraenoate + reduced [NADPH--hemoprotein reductase] + O2 = (14R,15S)-epoxy-(5Z,8Z,11Z)-eicosatrienoate + oxidized [NADPH--hemoprotein reductase] + H2O + H(+). The enzyme catalyses (5Z,8Z,11Z,14Z,17Z)-eicosapentaenoate + reduced [NADPH--hemoprotein reductase] + O2 = (17R,18S)-epoxy-(5Z,8Z,11Z,14Z)-eicosatetraenoate + oxidized [NADPH--hemoprotein reductase] + H2O + H(+). The catalysed reaction is (4Z,7Z,10Z,13Z,16Z,19Z)-docosahexaenoate + reduced [NADPH--hemoprotein reductase] + O2 = (19S,20R)-epoxy-(4Z,7Z,10Z,13Z,16Z)-docosapentaenoate + oxidized [NADPH--hemoprotein reductase] + H2O + H(+). It carries out the reaction (4Z,7Z,10Z,13Z,16Z,19Z)-docosahexaenoate + reduced [NADPH--hemoprotein reductase] + O2 = (19R,20S)-epoxy-(4Z,7Z,10Z,13Z,16Z)-docosapentaenoate + oxidized [NADPH--hemoprotein reductase] + H2O + H(+). It catalyses the reaction all-trans-retinol + reduced [NADPH--hemoprotein reductase] + O2 = all-trans-retinal + oxidized [NADPH--hemoprotein reductase] + 2 H2O + H(+). The enzyme catalyses all-trans-retinal + reduced [NADPH--hemoprotein reductase] + O2 = all-trans-retinoate + oxidized [NADPH--hemoprotein reductase] + H2O + 2 H(+). The catalysed reaction is (13S)-hydroperoxy-(9Z,11E)-octadecadienoate = 13-oxo-(9Z,11E)-octadecadienoate + H2O. It carries out the reaction (12S)-hydroperoxy-(5Z,8Z,10E,14Z)-eicosatetraenoate = 12-oxo-(5Z,8Z,10E,14Z)-eicosatetraenoate + H2O. It catalyses the reaction (15S)-hydroperoxy-(5Z,8Z,11Z,13E)-eicosatetraenoate = 15-oxo-(5Z,8Z,11Z,13E)-eicosatetraenoate + H2O. The enzyme catalyses (5S)-hydroperoxy-(6E,8Z,11Z,14Z)-eicosatetraenoate = 5-oxo-(6E,8Z,11Z,14Z)-eicosatetraenoate + H2O. It participates in steroid hormone biosynthesis. It functions in the pathway lipid metabolism; fatty acid metabolism. The protein operates within cofactor metabolism; retinol metabolism. In terms of biological role, a cytochrome P450 monooxygenase involved in the metabolism of various endogenous substrates, including fatty acids, steroid hormones and vitamins. Mechanistically, uses molecular oxygen inserting one oxygen atom into a substrate, and reducing the second into a water molecule, with two electrons provided by NADPH via cytochrome P450 reductase (CPR; NADPH-ferrihemoprotein reductase). Catalyzes the hydroxylation of carbon-hydrogen bonds. Exhibits high catalytic activity for the formation of hydroxyestrogens from estrone (E1) and 17beta-estradiol (E2), namely 2-hydroxy E1 and E2, as well as D-ring hydroxylated E1 and E2 at the C15alpha and C16alpha positions. Displays different regioselectivities for polyunsaturated fatty acids (PUFA) hydroxylation. Catalyzes the epoxidation of double bonds of certain PUFA. Converts arachidonic acid toward epoxyeicosatrienoic acid (EET) regioisomers, 8,9-, 11,12-, and 14,15-EET, that function as lipid mediators in the vascular system. Displays an absolute stereoselectivity in the epoxidation of eicosapentaenoic acid (EPA) producing the 17(R),18(S) enantiomer. May play an important role in all-trans retinoic acid biosynthesis in extrahepatic tissues. Catalyzes two successive oxidative transformation of all-trans retinol to all-trans retinal and then to the active form all-trans retinoic acid. May also participate in eicosanoids metabolism by converting hydroperoxide species into oxo metabolites (lipoxygenase-like reaction, NADPH-independent). The polypeptide is Cytochrome P450 1A1 (Rattus norvegicus (Rat)).